The sequence spans 569 residues: Pyruvate decarboxylase (569 aa).

2 residues coordinate pyruvate: Asp-38 and His-124. Thiamine diphosphate is bound by residues Thr-398 and 421–423 (GSI). Asp-451 contributes to the Mg(2+) binding site. Thiamine diphosphate is bound by residues 452–453 (GS) and 478–483 (NEGYTI). Positions 478 and 480 each coordinate Mg(2+). Residue Glu-484 participates in pyruvate binding.

The protein belongs to the TPP enzyme family. In terms of assembly, homotetramer. The cofactor is Mg(2+). Requires thiamine diphosphate as cofactor.

The catalysed reaction is a 2-oxocarboxylate + H(+) = an aldehyde + CO2. It catalyses the reaction pyruvate + H(+) = acetaldehyde + CO2. The chain is Pyruvate decarboxylase (pdcA) from Aspergillus fumigatus (strain ATCC MYA-4609 / CBS 101355 / FGSC A1100 / Af293) (Neosartorya fumigata).